Consider the following 271-residue polypeptide: Formamidopyrimidine-DNA glycosylase (271 aa).

The Schiff-base intermediate with DNA role is filled by Pro2. Glu3 serves as the catalytic Proton donor. Catalysis depends on Lys57, which acts as the Proton donor; for beta-elimination activity. His90, Arg109, and Lys151 together coordinate DNA. An FPG-type zinc finger spans residues 236–270 (HVYGRGGETCTSCGNLLSEIRLGQRTTVFCGICQT). Catalysis depends on Arg260, which acts as the Proton donor; for delta-elimination activity.

This sequence belongs to the FPG family. Monomer. Requires Zn(2+) as cofactor.

The enzyme catalyses Hydrolysis of DNA containing ring-opened 7-methylguanine residues, releasing 2,6-diamino-4-hydroxy-5-(N-methyl)formamidopyrimidine.. It carries out the reaction 2'-deoxyribonucleotide-(2'-deoxyribose 5'-phosphate)-2'-deoxyribonucleotide-DNA = a 3'-end 2'-deoxyribonucleotide-(2,3-dehydro-2,3-deoxyribose 5'-phosphate)-DNA + a 5'-end 5'-phospho-2'-deoxyribonucleoside-DNA + H(+). Functionally, involved in base excision repair of DNA damaged by oxidation or by mutagenic agents. Acts as a DNA glycosylase that recognizes and removes damaged bases. Has a preference for oxidized purines, such as 7,8-dihydro-8-oxoguanine (8-oxoG). Has AP (apurinic/apyrimidinic) lyase activity and introduces nicks in the DNA strand. Cleaves the DNA backbone by beta-delta elimination to generate a single-strand break at the site of the removed base with both 3'- and 5'-phosphates. The protein is Formamidopyrimidine-DNA glycosylase of Shewanella sp. (strain W3-18-1).